The following is a 128-amino-acid chain: Keratin-associated protein 2-1 (128 aa).

A 10 X 5 AA repeats of C-C-[CDPQRWG]-[APRS]-[CIPSTVD] region spans residues 5–112 (CCGSTFSSLS…SVQSPCCRPP (108 aa)).

The protein belongs to the KRTAP type 2 family. In terms of assembly, interacts with hair keratins.

In the hair cortex, hair keratin intermediate filaments are embedded in an interfilamentous matrix, consisting of hair keratin-associated proteins (KRTAP), which are essential for the formation of a rigid and resistant hair shaft through their extensive disulfide bond cross-linking with abundant cysteine residues of hair keratins. The matrix proteins include the high-sulfur and high-glycine-tyrosine keratins. The chain is Keratin-associated protein 2-1 (KRTAP2-1) from Homo sapiens (Human).